We begin with the raw amino-acid sequence, 469 residues long: GTPase Der (469 aa).

2 EngA-type G domains span residues 30–193 (PVLA…PEVA) and 203–376 (RRVA…ASWD). GTP-binding positions include 36 to 43 (GRPNVGKS), 83 to 87 (DTGGW), 145 to 148 (NKVD), 209 to 216 (GKPNVGKS), 256 to 260 (DTAGL), and 321 to 324 (NKWD). The region spanning 377–459 (TRIPTGPLNS…PIRINVRVRE (83 aa)) is the KH-like domain.

It belongs to the TRAFAC class TrmE-Era-EngA-EngB-Septin-like GTPase superfamily. EngA (Der) GTPase family. As to quaternary structure, associates with the 50S ribosomal subunit.

In terms of biological role, GTPase that plays an essential role in the late steps of ribosome biogenesis. This Mycobacterium ulcerans (strain Agy99) protein is GTPase Der.